A 117-amino-acid polypeptide reads, in one-letter code: Large ribosomal subunit protein bL19 (117 aa).

The protein belongs to the bacterial ribosomal protein bL19 family.

Its function is as follows. This protein is located at the 30S-50S ribosomal subunit interface and may play a role in the structure and function of the aminoacyl-tRNA binding site. This is Large ribosomal subunit protein bL19 from Kineococcus radiotolerans (strain ATCC BAA-149 / DSM 14245 / SRS30216).